We begin with the raw amino-acid sequence, 228 residues long: Prolactin-2A1 (228 aa).

Residues Met1–Leu29 form the signal peptide. Intrachain disulfides connect Cys87–Cys203 and Cys220–Cys228.

Belongs to the somatotropin/prolactin family. Expressed specifically in the placenta. Highly expressed in invasive trophoblast cells lining the central placental vessel.

The protein resides in the secreted. This Rattus norvegicus (Rat) protein is Prolactin-2A1 (Prl2a1).